The primary structure comprises 339 residues: Dihydroorotate dehydrogenase (quinone) (339 aa).

FMN is bound by residues 61–65 and threonine 85; that span reads AGLDK. Lysine 65 is a binding site for substrate. 110-114 contributes to the substrate binding site; that stretch reads NRMGF. The FMN site is built by asparagine 138 and asparagine 171. Asparagine 171 provides a ligand contact to substrate. Serine 174 (nucleophile) is an active-site residue. Asparagine 176 provides a ligand contact to substrate. Lysine 216 and threonine 244 together coordinate FMN. Substrate is bound at residue 245–246; sequence NT. FMN contacts are provided by residues glycine 267, glycine 296, and 317 to 318; that span reads YS.

The protein belongs to the dihydroorotate dehydrogenase family. Type 2 subfamily. Monomer. FMN is required as a cofactor.

It localises to the cell membrane. The catalysed reaction is (S)-dihydroorotate + a quinone = orotate + a quinol. The protein operates within pyrimidine metabolism; UMP biosynthesis via de novo pathway; orotate from (S)-dihydroorotate (quinone route): step 1/1. Functionally, catalyzes the conversion of dihydroorotate to orotate with quinone as electron acceptor. This chain is Dihydroorotate dehydrogenase (quinone), found in Pseudomonas fluorescens (strain Pf0-1).